The sequence spans 584 residues: Aspartate--tRNA(Asp/Asn) ligase (584 aa).

E177 contributes to the L-aspartate binding site. An aspartate region spans residues 201 to 204; sequence QLFK. Residue R223 participates in L-aspartate binding. Residues 223–225 and Q232 contribute to the ATP site; that span reads RDE. H447 is an L-aspartate binding site. E481 is an ATP binding site. R488 is a binding site for L-aspartate. 533 to 536 is an ATP binding site; it reads GLDR.

This sequence belongs to the class-II aminoacyl-tRNA synthetase family. Type 1 subfamily. As to quaternary structure, homodimer.

It localises to the cytoplasm. It catalyses the reaction tRNA(Asx) + L-aspartate + ATP = L-aspartyl-tRNA(Asx) + AMP + diphosphate. Its function is as follows. Aspartyl-tRNA synthetase with relaxed tRNA specificity since it is able to aspartylate not only its cognate tRNA(Asp) but also tRNA(Asn). Reaction proceeds in two steps: L-aspartate is first activated by ATP to form Asp-AMP and then transferred to the acceptor end of tRNA(Asp/Asn). The polypeptide is Aspartate--tRNA(Asp/Asn) ligase (Chlamydia abortus (strain DSM 27085 / S26/3) (Chlamydophila abortus)).